We begin with the raw amino-acid sequence, 217 residues long: Ribulose-phosphate 3-epimerase (217 aa).

Serine 7 lines the substrate pocket. A divalent metal cation is bound by residues histidine 32, aspartate 34, and histidine 65. Aspartate 34 (proton acceptor) is an active-site residue. Residues histidine 65, 141–144 (GFGG), 175–177 (DGG), and 197–198 (GS) each bind substrate. A divalent metal cation is bound at residue aspartate 175. Aspartate 175 functions as the Proton donor in the catalytic mechanism.

Belongs to the ribulose-phosphate 3-epimerase family. The cofactor is a divalent metal cation.

It carries out the reaction D-ribulose 5-phosphate = D-xylulose 5-phosphate. The protein operates within carbohydrate degradation. Catalyzes the reversible epimerization of D-ribulose 5-phosphate to D-xylulose 5-phosphate. In Bacillus subtilis (strain 168), this protein is Ribulose-phosphate 3-epimerase.